The sequence spans 188 residues: Putative manganese efflux pump MntP (188 aa).

Helical transmembrane passes span 1–21 (MLIQILLIGVSVSMDTFAVSI), 40–60 (LWFGGFQALFPLLGYFAASTF), 64–84 (VTAVDHWIIFGLLALIGGNMV), 105–127 (HMLPLAVACSIDAVAVGVSFAFM), 131–153 (IWLSVVIIGITTGLFSAAGLYIG), and 166–186 (IAGGVVLILIGLKVLFEHLGF).

It belongs to the MntP (TC 9.B.29) family.

It localises to the cell membrane. Probably functions as a manganese efflux pump. This chain is Putative manganese efflux pump MntP, found in Bifidobacterium adolescentis (strain ATCC 15703 / DSM 20083 / NCTC 11814 / E194a).